An 87-amino-acid chain; its full sequence is uncharacterized protein (87 aa).

This is an uncharacterized protein from Enterobacteria phage T4 (Bacteriophage T4).